The following is a 266-amino-acid chain: Glucosamine-6-phosphate deaminase (266 aa).

The Proton acceptor; for enolization step role is filled by Asp-72. The active-site For ring-opening step is Asp-141. His-143 functions as the Proton acceptor; for ring-opening step in the catalytic mechanism. Residue Glu-148 is the For ring-opening step of the active site.

Belongs to the glucosamine/galactosamine-6-phosphate isomerase family. NagB subfamily. Homohexamer.

The enzyme catalyses alpha-D-glucosamine 6-phosphate + H2O = beta-D-fructose 6-phosphate + NH4(+). It functions in the pathway amino-sugar metabolism; N-acetylneuraminate degradation; D-fructose 6-phosphate from N-acetylneuraminate: step 5/5. Its activity is regulated as follows. Allosterically activated by N-acetylglucosamine 6-phosphate (GlcNAc6P). Its function is as follows. Catalyzes the reversible isomerization-deamination of glucosamine 6-phosphate (GlcN6P) to form fructose 6-phosphate (Fru6P) and ammonium ion. This is Glucosamine-6-phosphate deaminase from Salmonella typhimurium (strain LT2 / SGSC1412 / ATCC 700720).